Here is a 742-residue protein sequence, read N- to C-terminus: Probable LRR receptor-like serine/threonine-protein kinase At2g02780 (742 aa).

A signal peptide spans 1-25 (MQISLQIHLSSFTFLLLIFLLPVLS). Residues 26–354 (ESQVASSESQ…KDSARIKLGL (329 aa)) are Extracellular-facing. 9 LRR repeats span residues 74–96 (HGHV…SFHK), 104–128 (LSSL…IITK), 130–154 (SPSL…IVSL), 156–177 (NLKS…DLRG), 178–204 (LSNL…KLTT), 206–223 (SLKN…IKKL), 224–247 (NNLQ…LFSI), 249–271 (SLQI…SCTS), and 273–294 (KIIT…CYSS). The N-linked (GlcNAc...) asparagine glycan is linked to Asn85. The N-linked (GlcNAc...) asparagine glycan is linked to Asn137. Residue Asn209 is glycosylated (N-linked (GlcNAc...) asparagine). Asn266 is a glycosylation site (N-linked (GlcNAc...) asparagine). An N-linked (GlcNAc...) asparagine glycan is attached at Asn299. The chain crosses the membrane as a helical span at residues 355–375 (VILIIIGVIILAAILVLLVLI). Residues 376-742 (ALKRRRSRSE…HESSMKAIYE (367 aa)) are Cytoplasmic-facing. The tract at residues 386-424 (DDPFEVNNSNNERHASDKVSVCSTTTASSKSLPDSRRVP) is disordered. Polar residues predominate over residues 406 to 417 (VCSTTTASSKSL). In terms of domain architecture, Protein kinase spans 426-720 (TMRSAVIGLP…DVVWNLQYTI (295 aa)).

It belongs to the protein kinase superfamily. Ser/Thr protein kinase family.

The protein localises to the membrane. The enzyme catalyses L-seryl-[protein] + ATP = O-phospho-L-seryl-[protein] + ADP + H(+). It carries out the reaction L-threonyl-[protein] + ATP = O-phospho-L-threonyl-[protein] + ADP + H(+). In Arabidopsis thaliana (Mouse-ear cress), this protein is Probable LRR receptor-like serine/threonine-protein kinase At2g02780.